We begin with the raw amino-acid sequence, 308 residues long: Protein translocase subunit SecF (308 aa).

Helical transmembrane passes span 23-42, 140-160, 164-184, 194-214, 246-266, and 272-292; these read VSYS…IGIY, IEAG…YIGV, WYFG…ALGF, LSTI…SVVI, ILTV…GGKA, and VLVF…SAPI.

This sequence belongs to the SecD/SecF family. SecF subfamily. Forms a complex with SecD. Part of the essential Sec protein translocation apparatus which comprises SecA, SecYEG and auxiliary proteins SecDF-YajC and YidC.

It is found in the cell inner membrane. Functionally, part of the Sec protein translocase complex. Interacts with the SecYEG preprotein conducting channel. SecDF uses the proton motive force (PMF) to complete protein translocation after the ATP-dependent function of SecA. The sequence is that of Protein translocase subunit SecF from Rickettsia typhi (strain ATCC VR-144 / Wilmington).